The chain runs to 378 residues: Aminotransferase apf4 (378 aa).

Arg88 contacts pyridoxal 5'-phosphate. Lys189 is modified (N6-(pyridoxal phosphate)lysine). Residue Glu228 participates in pyridoxal 5'-phosphate binding. The tract at residues 359–378 is disordered; that stretch reads ERGHNGQPTADPTRVIEMPE.

This sequence belongs to the class-IV pyridoxal-phosphate-dependent aminotransferase family. The cofactor is pyridoxal 5'-phosphate.

It functions in the pathway secondary metabolite biosynthesis. In terms of biological role, aminotransferase; part of the gene cluster that mediates the biosynthesis of the cyclic tetrapeptide apicidin F (APF). The non-ribosomal peptide synthetase apf1 incorporates four different amino acids to produce apicidin F: L-phenylalanine, D-pipecolic acid (D-pip), N-methoxy-L-tryptophan and L-2-aminooctanedioic acid. L-Phenylalanine is the only proteinogenic amino acid directly used by apf1. The 3 other apf1 substrates are non-proteinogenic and have to be modified by other enzymes of the cluster. Lysine is converted to delta-1-pyrroline-5-carboxylate (P5C) which is reduced to L-pipecolic acid (L-pip) by apf3. L-pip is epimerized to D-pip, probably by apf1 activity, prior to incorporation. L-Tryptophan is N-oxidyzed by one of the cytochrome P450 monooxygenases (apf7 or apf8), and further methylated at the hydroxy group by the O-methyltransferase apf6 to yield N-methoxy-L-tryptophan. The synthesis of the fourth apf1 substrate is more complex. The fatty acid synthase apf5 is involved in the synthesis of the octanoic acid backbone of L-2-aminooctanedioic acid by fixing one acetyl-CoA unit and three malonyl-CoA units. Then one of the cytochrome P450 monooxygenases (apf7 or apf8) may oxidize this backbone to 2-oxooctanoic acid. The aminotransferase apf4 is predicted to catalyze the exchange of the keto group with an amino group. The next step would be the oxidation of 2-aminooctanoic acid by one of the cytochrome P450 monooxygenases (apf7 or apf8). The last step is the oxidation of 2-amino-8-hydroxyoctanoic acid to 2-aminooctanedioic acid is catalyzed by the FAD-dependent monooxygenase apf9. This is Aminotransferase apf4 from Gibberella fujikuroi (strain CBS 195.34 / IMI 58289 / NRRL A-6831) (Bakanae and foot rot disease fungus).